The primary structure comprises 170 residues: Peptide deformylase (170 aa).

Positions 92 and 134 each coordinate Fe cation. Glu-135 is an active-site residue. His-138 provides a ligand contact to Fe cation.

Belongs to the polypeptide deformylase family. Requires Fe(2+) as cofactor.

The catalysed reaction is N-terminal N-formyl-L-methionyl-[peptide] + H2O = N-terminal L-methionyl-[peptide] + formate. Its function is as follows. Removes the formyl group from the N-terminal Met of newly synthesized proteins. Requires at least a dipeptide for an efficient rate of reaction. N-terminal L-methionine is a prerequisite for activity but the enzyme has broad specificity at other positions. The protein is Peptide deformylase of Chromohalobacter salexigens (strain ATCC BAA-138 / DSM 3043 / CIP 106854 / NCIMB 13768 / 1H11).